Here is a 381-residue protein sequence, read N- to C-terminus: Creatine kinase B-type (381 aa).

Ser4 bears the Phosphoserine mark. Positions 11–98 constitute a Phosphagen kinase N-terminal domain; the sequence is KLRFPAEDEF…FDPIIEDRHG (88 aa). At Thr35 the chain carries Phosphothreonine. Lys45 participates in a covalent cross-link: Glycyl lysine isopeptide (Lys-Gly) (interchain with G-Cter in ubiquitin). Creatine is bound at residue Val72. The span at 96–110 shows a compositional bias: basic and acidic residues; the sequence is RHGGYQPSDEHKTDL. The tract at residues 96–122 is disordered; that stretch reads RHGGYQPSDEHKTDLNPDNLQGGDDLD. Lys107 is covalently cross-linked (Glycyl lysine isopeptide (Lys-Gly) (interchain with G-Cter in ubiquitin)). Tyr125 carries the post-translational modification Phosphotyrosine. The Phosphagen kinase C-terminal domain maps to 125 to 367; it reads YVLSSRVRTG…KLLIEMEQRL (243 aa). ATP is bound by residues 128 to 132, Arg130, Arg132, and His191; that span reads SSRVR. Positions 130–138 are internal MTS-like signal; the sequence is RVRTGRSIR. Ser199 is modified (phosphoserine). Glu232 provides a ligand contact to creatine. Arg236 provides a ligand contact to ATP. Tyr269 carries the post-translational modification 3'-nitrotyrosine. Ser285 contributes to the creatine binding site. Position 292 (Arg292) interacts with ATP. Ser309 bears the Phosphoserine mark. ATP contacts are provided by residues Arg320, 320–325, and Asp335; that span reads RGTGGV. Thr322 carries the phosphothreonine modification. Lys381 participates in a covalent cross-link: Glycyl lysine isopeptide (Lys-Gly) (interchain with G-Cter in ubiquitin).

The protein belongs to the ATP:guanido phosphotransferase family. Dimer of identical or non-identical chains, which can be either B (brain type) or M (muscle type). With MM being the major form in skeletal muscle and myocardium, MB existing in myocardium, and BB existing in many tissues, especially brain. Interacts with SLC12A6 (via C-terminus); the interaction may be required for SLC12A6 potassium-chloride cotransport activity. Post-translationally, ubiquitinated by the ECS(ASB9) complex, leading to its degradation by the proteasome. As to expression, in the kidney localized primarily in the outer medulla in the thick ascending limb and distal convoluted tubule.

The protein localises to the cytoplasm. It localises to the cytosol. Its subcellular location is the mitochondrion. The protein resides in the cell membrane. It carries out the reaction creatine + ATP = N-phosphocreatine + ADP + H(+). Reversibly catalyzes the transfer of phosphate between ATP and various phosphogens (e.g. creatine phosphate). Creatine kinase isoenzymes play a central role in energy transduction in tissues with large, fluctuating energy demands, such as skeletal muscle, heart, brain and spermatozoa. Acts as a key regulator of adaptive thermogenesis as part of the futile creatine cycle: localizes to the mitochondria of thermogenic fat cells and acts by mediating phosphorylation of creatine to initiate a futile cycle of creatine phosphorylation and dephosphorylation. During the futile creatine cycle, creatine and N-phosphocreatine are in a futile cycle, which dissipates the high energy charge of N-phosphocreatine as heat without performing any mechanical or chemical work. This is Creatine kinase B-type (Ckb) from Rattus norvegicus (Rat).